Here is a 364-residue protein sequence, read N- to C-terminus: MISIVLELFQNLCCCRGFSDATIRVNDKRYRIQRLLGEGGMSFVYLVQLSKNSLIIDNGIATPELYALKKIICPSVESISNGMREIENYKRFQSPYVIKSIDSQVMQEKDGSKTIYIVLPYYSLGSLQDSINRRLLEGTFVSEAECVRIMLGVTRGLLCLHDPASRQDNATSRVNVDAVSMTYSDETAMLLEDTPLEMDMLSSNSAGSIAYAHRDITPSNILFSSDGLPVIGDLGSCSQADITIENRHQLSELQEWVNDNCTLPYTPPELLNLKLNQVLSSKVDIWSLGCTFYTLMFGISPFEREEQIHGASLTYAINTGKYSFPRNSRFSEGLLSVIKKCIQVDPIQRPTTSQLLNLLQDLDT.

Residues cysteine 13, cysteine 14, and cysteine 15 are each lipidated (S-palmitoyl cysteine). Positions 30 to 364 (YRIQRLLGEG…LLNLLQDLDT (335 aa)) constitute a Protein kinase domain. ATP-binding positions include 36-44 (LGEGGMSFV) and lysine 69. Aspartate 215 (proton acceptor) is an active-site residue.

The protein belongs to the protein kinase superfamily. Ser/Thr protein kinase family.

It localises to the vacuole membrane. It carries out the reaction L-seryl-[protein] + ATP = O-phospho-L-seryl-[protein] + ADP + H(+). It catalyses the reaction L-threonyl-[protein] + ATP = O-phospho-L-threonyl-[protein] + ADP + H(+). Functionally, serine/threonine-protein kinase involved in vacuolar processing and morphology. This Saccharomyces cerevisiae (strain ATCC 204508 / S288c) (Baker's yeast) protein is Serine/threonine-protein kinase ENV7 (ENV7).